Reading from the N-terminus, the 637-residue chain is Biosynthetic arginine decarboxylase (637 aa).

At Lys-101 the chain carries N6-(pyridoxal phosphate)lysine. 286-296 provides a ligand contact to substrate; the sequence is FDVGGGLAVDY.

This sequence belongs to the Orn/Lys/Arg decarboxylase class-II family. SpeA subfamily. It depends on Mg(2+) as a cofactor. The cofactor is pyridoxal 5'-phosphate.

It carries out the reaction L-arginine + H(+) = agmatine + CO2. The protein operates within amine and polyamine biosynthesis; agmatine biosynthesis; agmatine from L-arginine: step 1/1. Catalyzes the biosynthesis of agmatine from arginine. The polypeptide is Biosynthetic arginine decarboxylase (Shewanella sp. (strain MR-7)).